The following is a 242-amino-acid chain: Protein Thf1 (242 aa).

Positions 178 to 209 (SSDKLQKDLDLYRSNLDKMQQLLTVIEDTLEA) form a coiled coil. Residues 212 to 242 (KKRASQKLEKKPEVVEEKEHKENEEQQQSSN) form a disordered region. The span at 217–235 (QKLEKKPEVVEEKEHKENE) shows a compositional bias: basic and acidic residues.

The protein belongs to the THF1 family.

Its function is as follows. May be involved in photosynthetic membrane biogenesis. The protein is Protein Thf1 of Crocosphaera subtropica (strain ATCC 51142 / BH68) (Cyanothece sp. (strain ATCC 51142)).